A 322-amino-acid chain; its full sequence is Tyrosine recombinase XerC (322 aa).

The tract at residues 1–25 (MPEAAPPVADARGSSPTATTGPGAD) is disordered. Low complexity predominate over residues 16 to 25 (PTATTGPGAD). In terms of domain architecture, Core-binding (CB) spans 25 to 111 (DATLSAVEPF…ACRSYYAWLL (87 aa)). A Tyr recombinase domain is found at 132–309 (KLPQVLDADE…DFQHLAKVYD (178 aa)). Catalysis depends on residues Arg171, Lys195, His261, Arg264, and His287. The O-(3'-phospho-DNA)-tyrosine intermediate role is filled by Tyr296.

It belongs to the 'phage' integrase family. XerC subfamily. Forms a cyclic heterotetrameric complex composed of two molecules of XerC and two molecules of XerD.

Its subcellular location is the cytoplasm. Site-specific tyrosine recombinase, which acts by catalyzing the cutting and rejoining of the recombining DNA molecules. The XerC-XerD complex is essential to convert dimers of the bacterial chromosome into monomers to permit their segregation at cell division. It also contributes to the segregational stability of plasmids. The chain is Tyrosine recombinase XerC from Xanthomonas campestris pv. campestris (strain 8004).